Consider the following 80-residue polypeptide: Cell division activator CedA (80 aa).

This sequence belongs to the CedA family.

Its function is as follows. Activates the cell division inhibited by chromosomal DNA over-replication. In Citrobacter koseri (strain ATCC BAA-895 / CDC 4225-83 / SGSC4696), this protein is Cell division activator CedA.